The sequence spans 82 residues: Large ribosomal subunit protein bL31 (82 aa).

This sequence belongs to the bacterial ribosomal protein bL31 family. Type A subfamily. In terms of assembly, part of the 50S ribosomal subunit.

Functionally, binds the 23S rRNA. This Rippkaea orientalis (strain PCC 8801 / RF-1) (Cyanothece sp. (strain PCC 8801)) protein is Large ribosomal subunit protein bL31.